A 485-amino-acid polypeptide reads, in one-letter code: Glycogen synthase (485 aa).

Position 21 (Lys21) interacts with ADP-alpha-D-glucose.

This sequence belongs to the glycosyltransferase 1 family. Bacterial/plant glycogen synthase subfamily.

It catalyses the reaction [(1-&gt;4)-alpha-D-glucosyl](n) + ADP-alpha-D-glucose = [(1-&gt;4)-alpha-D-glucosyl](n+1) + ADP + H(+). Its pathway is glycan biosynthesis; glycogen biosynthesis. In terms of biological role, synthesizes alpha-1,4-glucan chains using ADP-glucose. This Pseudomonas syringae pv. syringae (strain B728a) protein is Glycogen synthase.